The sequence spans 235 residues: MHIMEGFLPAGWCLVWWLIALPFLVMGIIQLRRMMKEDREYLPLLGVCGAFIFILSALKLPSVTGSCSHPTGTGLSTICFGYCVTAVVGAIVLLFQALLLAHGGLSTMGANMVSMAIGGPIAGYAVYKLMKDTSINIYVTVFLASAVADIVTYIITSFELALAYPAQVGGFLASFSAFFSIFAITQIPLSIMEGVVLALVFKYIIQLKPEIILKLHVFSEEQIAKARLAGDAEVA.

Helical transmembrane passes span Pro-9–Ile-29, Tyr-41–Pro-61, Phe-80–Leu-100, Thr-107–Tyr-127, Ile-135–Ile-155, Leu-160–Ser-180, and Ile-181–Phe-201.

The protein belongs to the CbiM family. Forms an energy-coupling factor (ECF) transporter complex composed of an ATP-binding protein (A component, CbiO), a transmembrane protein (T component, CbiQ) and 2 possible substrate-capture proteins (S components, CbiM and CbiN) of unknown stoichimetry.

The protein localises to the cell membrane. It participates in cofactor biosynthesis; adenosylcobalamin biosynthesis. Its function is as follows. Part of the energy-coupling factor (ECF) transporter complex CbiMNOQ involved in cobalt import. This is Putative cobalt transport protein CbiM 2 from Methanosphaerula palustris (strain ATCC BAA-1556 / DSM 19958 / E1-9c).